The chain runs to 130 residues: Small ribosomal subunit protein uS8 (130 aa).

It belongs to the universal ribosomal protein uS8 family.

The protein resides in the cytoplasm. In Daucus carota (Wild carrot), this protein is Small ribosomal subunit protein uS8 (RPS15A).